The following is a 159-amino-acid chain: Phosphopantetheine adenylyltransferase (159 aa).

Ser8 lines the substrate pocket. ATP contacts are provided by residues 8–9 (SF) and His16. Residues Lys40, Leu72, and Arg86 each coordinate substrate. Residues 87–89 (GLR), Glu97, and 122–128 (YSFISSS) each bind ATP.

The protein belongs to the bacterial CoaD family. In terms of assembly, homohexamer. Mg(2+) serves as cofactor.

It is found in the cytoplasm. The enzyme catalyses (R)-4'-phosphopantetheine + ATP + H(+) = 3'-dephospho-CoA + diphosphate. It participates in cofactor biosynthesis; coenzyme A biosynthesis; CoA from (R)-pantothenate: step 4/5. Reversibly transfers an adenylyl group from ATP to 4'-phosphopantetheine, yielding dephospho-CoA (dPCoA) and pyrophosphate. In Thermosipho melanesiensis (strain DSM 12029 / CIP 104789 / BI429), this protein is Phosphopantetheine adenylyltransferase.